Reading from the N-terminus, the 233-residue chain is Large ribosomal subunit protein uL1 (233 aa).

It belongs to the universal ribosomal protein uL1 family. In terms of assembly, part of the 50S ribosomal subunit.

Binds directly to 23S rRNA. The L1 stalk is quite mobile in the ribosome, and is involved in E site tRNA release. Functionally, protein L1 is also a translational repressor protein, it controls the translation of the L11 operon by binding to its mRNA. The chain is Large ribosomal subunit protein uL1 from Brucella suis (strain ATCC 23445 / NCTC 10510).